The primary structure comprises 165 residues: Large ribosomal subunit protein uL30 (165 aa).

Belongs to the universal ribosomal protein uL30 family. Part of the 50S ribosomal subunit.

This is Large ribosomal subunit protein uL30 from Thermoplasma volcanium (strain ATCC 51530 / DSM 4299 / JCM 9571 / NBRC 15438 / GSS1).